A 350-amino-acid polypeptide reads, in one-letter code: Hydroxymethylglutaryl-CoA synthase (350 aa).

Glu-83 acts as the Proton donor/acceptor in catalysis. Cys-115 (acyl-thioester intermediate) is an active-site residue. 2 residues coordinate (3S)-3-hydroxy-3-methylglutaryl-CoA: Cys-115 and Thr-156. A CoA-binding site is contributed by Arg-204. 2 residues coordinate (3S)-3-hydroxy-3-methylglutaryl-CoA: Thr-206 and His-239. The Proton donor/acceptor role is filled by His-239. Residue Lys-244 coordinates CoA. Residues Asn-271 and Ser-301 each contribute to the (3S)-3-hydroxy-3-methylglutaryl-CoA site.

The protein belongs to the thiolase-like superfamily. Archaeal HMG-CoA synthase family. In terms of assembly, interacts with acetoacetyl-CoA thiolase that catalyzes the precedent step in the pathway and with a DUF35 protein. The acetoacetyl-CoA thiolase/HMG-CoA synthase complex channels the intermediate via a fused CoA-binding site, which allows for efficient coupling of the endergonic thiolase reaction with the exergonic HMGCS reaction.

The enzyme catalyses acetoacetyl-CoA + acetyl-CoA + H2O = (3S)-3-hydroxy-3-methylglutaryl-CoA + CoA + H(+). It functions in the pathway metabolic intermediate biosynthesis; (R)-mevalonate biosynthesis; (R)-mevalonate from acetyl-CoA: step 2/3. In terms of biological role, catalyzes the condensation of acetyl-CoA with acetoacetyl-CoA to form 3-hydroxy-3-methylglutaryl-CoA (HMG-CoA). Functions in the mevalonate (MVA) pathway leading to isopentenyl diphosphate (IPP), a key precursor for the biosynthesis of isoprenoid compounds that are building blocks of archaeal membrane lipids. The protein is Hydroxymethylglutaryl-CoA synthase of Thermococcus kodakarensis (strain ATCC BAA-918 / JCM 12380 / KOD1) (Pyrococcus kodakaraensis (strain KOD1)).